The following is a 212-amino-acid chain: Transmembrane emp24 domain-containing protein p24delta4 (212 aa).

An N-terminal signal peptide occupies residues 1 to 25; that stretch reads MKKKMIPTTILLSALIFSLSPICEA. Residues 26–179 lie on the Lumenal side of the membrane; the sequence is VWLTVPHTGS…RIVSEKTNSR (154 aa). Residues 35-147 enclose the GOLD domain; sequence SKCVSEEIQS…IEGVELEFKK (113 aa). The N-linked (GlcNAc...) asparagine glycan is linked to Asn82. The stretch at 133 to 155 forms a coiled coil; the sequence is ARKEKIEGVELEFKKLEGAVEAI. Omega-N-methylated arginine is present on residues Arg165 and Arg170. A helical transmembrane segment spans residues 180–200; the sequence is VAWYSIMSLGICIVVSGLQIL. Residues 201–212 lie on the Cytoplasmic side of the membrane; it reads YLKQYFEKKKLI. The COPII vesicle coat-binding signature appears at 205–206; the sequence is YF. The COPI vesicle coat-binding motif lies at 205–212; it reads YFEKKKLI.

This sequence belongs to the EMP24/GP25L family. Probably oligomerizes with other members of the EMP24/GP25L family. Associates with the COPI vesicle coat (coatomer). Associates with the COPII vesicle coat (coatomer).

Its subcellular location is the endoplasmic reticulum membrane. It is found in the golgi apparatus membrane. Its function is as follows. Involved in vesicular protein trafficking. Mainly functions in the early secretory pathway. Required for trafficking GLL23, a component of the PYK10 complex. May act as a receptor facilitating its packing into COPII carriers and export from the endoplasmic reticulum. In Arabidopsis thaliana (Mouse-ear cress), this protein is Transmembrane emp24 domain-containing protein p24delta4 (CYB).